Consider the following 92-residue polypeptide: Ictacalcin (92 aa).

2 consecutive EF-hand domains span residues 12–47 (ISTFHKYSGKEGDKCTLTKGELKDLLTKELGGAFGN) and 49–84 (SDQATLDKIFKDLDTNADGVVDFQEYATMVACTTML). 6 residues coordinate Ca(2+): Thr-27, Glu-32, Asp-62, Asn-64, Asp-66, and Glu-73.

This sequence belongs to the S-100 family. Abundant in epithelial cells of olfactory rosette, barbel, skin and gill but not brain or muscle.

Plays an important role in catfish calcium homeostasis. In Ictalurus punctatus (Channel catfish), this protein is Ictacalcin.